A 162-amino-acid chain; its full sequence is uncharacterized protein (162 aa).

Residues 1 to 23 form the signal peptide; sequence MLSLKSPAVLLSMVILVPLFALA.

This is an uncharacterized protein from Mycosarcoma maydis (Corn smut fungus).